A 347-amino-acid polypeptide reads, in one-letter code: Protein YIPF3 (347 aa).

The disordered stretch occupies residues 1 to 28 (MATQAAPASGVRNGAGPEWGGFEENIQG). Alanine 2 is subject to N-acetylalanine. At 2 to 145 (ATQAAPASGV…PIKMVNFPQK (144 aa)) the chain is on the cytoplasmic side. Residues 146–166 (VAGELYGPLMLVFTLVAILLH) traverse the membrane as a helical segment. Topologically, residues 167-184 (GMKTSDTIIREGTLMGTA) are lumenal. Residues 185–205 (IGTCFGYWLGVSSFIYFLAYL) traverse the membrane as a helical segment. Residues 206–211 (CNAQIT) lie on the Cytoplasmic side of the membrane. The chain crosses the membrane as a helical span at residues 212 to 234 (MLQMLALLGYGLFGHCIVLFITY). Over 235–237 (NIH) the chain is Lumenal. A helical transmembrane segment spans residues 238-260 (LHALFYLFWLLLGGLSTLRMVAV). The Cytoplasmic portion of the chain corresponds to 261-271 (LVSRTVGPTQR). Residues 272–292 (LLLCGTLAALHMLFLLYLHFA) form a helical membrane-spanning segment. Residues 293–347 (YHKVVEGILDTLEGPNIPPMQRVPRDIPAVLPAAKLPVAVVNATAKAIAVTLQSH) lie on the Lumenal side of the membrane. N-linked (GlcNAc...) asparagine glycosylation occurs at asparagine 334.

The protein belongs to the YIP1 family. As to quaternary structure, interacts with YIPF4 and YIPF5.

It localises to the cell membrane. It is found in the golgi apparatus. Its subcellular location is the cis-Golgi network membrane. The protein resides in the cytoplasm. Functionally, involved in the maintenance of the Golgi structure. May play a role in hematopoiesis. The sequence is that of Protein YIPF3 (Yipf3) from Rattus norvegicus (Rat).